The chain runs to 354 residues: Protein sex-lethal (354 aa).

Residues 1–21 form a disordered region; that stretch reads MYGNNNPGSNNNNGGYPPYGY. 2 RRM domains span residues 125–203 and 211–291; these read TNLI…YARP and TNLY…LAEE.

Part of a complex containing fl(2)d, Sxl and vir. Part of a complex composed of at least mei-P26, bam, bgcn and Sxl; this complex is involved in translational repression of nanos mRNA. interacts with mei-p26. Interacts with nito. Interacts with Unr; cooperates with Unr to prevent translation of msl-2 transcripts. Interacts with how; promoting nuclear retention of msl-2 transcripts. Expressed in somatic tissues, but not in the pole cells, which are the precursors of the germline. Expressed in the anterior of the germarium.

Its subcellular location is the nucleus. The protein localises to the cytoplasm. Its function is as follows. Sex determination switch protein, which controls sexual development and dosage compensation in females. Sxl protein is only active in females: it is inactive in males throughout development. Acts as a mRNA-binding protein, which specifically binds to a subset of pre-mRNAs and mRNAs and regulates their processing and/or translation. Binds nanos mRNA and is involved in bam-bgcn mediated repression of nanos mRNA translation. Promotes sexual development by controlling the female-specific alternative splicing of the transformer (tra) pre-mRNA: binds tightly to a characteristic uridine-rich polypyrimidine tract at the non-sex specific 3' splice site in one of the tra introns, preventing the general splicing factor U2AF from binding to this site and forcing it to bind to the female-specific 3' splice site. Acts as an inhibitor of dosage compensation in females by preventing production of msl-2 protein, an essential component of the MSL complex, the complex that mediates X-chromosome dosage compensation. Specifically binds to uridine stretches in both the 5'- and 3'-UTR of msl-2 transcripts. Sxl first acts at the splicing level by promoting retention of an intron in the 5' UTR of msl-2 pre-mRNA. The retained intron contains Sxl-binding sites that are required for subsequent steps of repression: after msl-2 mRNA export into the cytoplasm, Sxl coordinates its translational repression by targeting early steps of translation initiation. Together with how, Sxl also prevents production of msl-2 protein by preventing nuclear export of msl-2 transcripts. Embryo-specific product, which is expressed early only in female embryos and specifies female-adult specific splicing. The chain is Protein sex-lethal from Drosophila melanogaster (Fruit fly).